Here is a 268-residue protein sequence, read N- to C-terminus: Tryptophan synthase alpha chain (268 aa).

Active-site proton acceptor residues include E49 and D60.

It belongs to the TrpA family. As to quaternary structure, tetramer of two alpha and two beta chains.

It catalyses the reaction (1S,2R)-1-C-(indol-3-yl)glycerol 3-phosphate + L-serine = D-glyceraldehyde 3-phosphate + L-tryptophan + H2O. Its pathway is amino-acid biosynthesis; L-tryptophan biosynthesis; L-tryptophan from chorismate: step 5/5. The alpha subunit is responsible for the aldol cleavage of indoleglycerol phosphate to indole and glyceraldehyde 3-phosphate. The chain is Tryptophan synthase alpha chain from Escherichia coli O139:H28 (strain E24377A / ETEC).